The primary structure comprises 379 residues: Deoxyhypusine synthase (379 aa).

NAD(+)-binding positions include 104–108, 130–132, E136, and D237; these read SNLVS and TAG. A spermidine-binding site is contributed by 135–136; that stretch reads EE. D242 contacts spermidine. G293 is an NAD(+) binding site. H298 is a spermidine binding site. 318–319 is an NAD(+) binding site; sequence TA. Residues 324–326 and 333–339 each bind spermidine; these read GSD and EAVSWGK. The active-site Nucleophile is K339. 352 to 353 is an NAD(+) binding site; sequence DA.

Belongs to the deoxyhypusine synthase family. In terms of assembly, homotetramer. NAD(+) is required as a cofactor.

The enzyme catalyses [eIF5A protein]-L-lysine + spermidine = [eIF5A protein]-deoxyhypusine + propane-1,3-diamine. The protein operates within protein modification; eIF5A hypusination. Its function is as follows. Catalyzes the NAD-dependent oxidative cleavage of spermidine and the subsequent transfer of the butylamine moiety of spermidine to the epsilon-amino group of a specific lysine residue of the eIF-5A precursor protein to form the intermediate deoxyhypusine residue. Also able to produce homospermidine from putrescine. The protein is Deoxyhypusine synthase (DHS1) of Nicotiana tabacum (Common tobacco).